The chain runs to 493 residues: Insulinoma-associated protein 2 (493 aa).

Over residues 1 to 12 (MPRGFLVKRTKR) the composition is skewed to basic residues. The segment at 1–20 (MPRGFLVKRTKRSGSSYRAR) is SNAG domain. The interval 1–77 (MPRGFLVKRT…PGPSPARPAG (77 aa)) is disordered. The C2H2-type 1; atypical zinc finger occupies 203-223 (FICQLCKHQYADPFALAQHRC). A C2H2-type 2 zinc finger spans residues 231-253 (YRCPECDKVFSCPANLASHRRWH). Positions 248–310 (SHRRWHKPRP…SGDGQHRDSA (63 aa)) are disordered. A compositionally biased stretch (pro residues) spans 267 to 276 (PHAPLTPPDP). Over residues 283-294 (ENGRVPRTDDQH) the composition is skewed to basic and acidic residues. C2H2-type zinc fingers lie at residues 354 to 376 (FVCP…LGTH), 398 to 420 (FACP…RLWH), and 452 to 475 (FSCK…NKCH).

As to expression, expressed in spleen, stomach, liver, kidney and testis. In the pancreas, expressed in islet cells, including insulin-producing beta-cells, but not in acinar cells (at protein level). In the brain, expressed in the neuronal cells of the cerebral cortex, the Purkinje cells of the cerebellum and the hippocampal region including CA1 and CA3 (at protein level).

It localises to the cytoplasm. The protein localises to the nucleus. Its function is as follows. May function as a growth suppressor or tumor suppressor in liver cells and in certain neurons. In Mus musculus (Mouse), this protein is Insulinoma-associated protein 2 (Insm2).